The primary structure comprises 687 residues: Chloride channel protein ClC-Ka (687 aa).

The next 4 membrane-spanning stretches (helical) occupy residues phenylalanine 52–glycine 72, leucine 161–glycine 181, valine 202–phenylalanine 222, and tyrosine 236–phenylalanine 256. Residues glutamate 259, glutamate 261, aspartate 278, and glutamate 281 each contribute to the Ca(2+) site. The next 6 membrane-spanning stretches (helical) occupy residues isoleucine 282–cysteine 302, alanine 329–alanine 349, phenylalanine 396–alanine 416, threonine 417–glycine 437, isoleucine 452–alanine 472, and leucine 486–leucine 506. At alanine 507–lysine 687 the chain is on the cytoplasmic side. CBS domains lie at methionine 551–serine 609 and cysteine 626–proline 684.

This sequence belongs to the chloride channel (TC 2.A.49) family. CLCNKA subfamily. Homodimer. Interacts with BSND.

It is found in the basolateral cell membrane. The enzyme catalyses chloride(in) = chloride(out). It carries out the reaction bromide(in) = bromide(out). It catalyses the reaction nitrate(in) = nitrate(out). The catalysed reaction is iodide(out) = iodide(in). With respect to regulation, activated by extracellular Ca(2+) and inhibited by extracellular acidic pH. In terms of biological role, anion-selective channel permeable to small monovalent anions with ion selectivity for chloride &gt; bromide &gt; nitrate &gt; iodide. Forms a homodimeric channel where each subunit has its own ion conduction pathway. May conduct double-barreled currents controlled by two types of gates, two fast gates that control each subunit independently and a slow common gate that opens and shuts off both subunits simultaneously. Assembles with the regulatory subunit BSND/Barttin for sorting at the basolateral plasma membrane domain and functional switch to the ion conducting state. CLCNKA:BSND channels display mostly a linear current-voltage relationship with fast gating at negative potentials. Mediates transepithelial chloride transport from the lumen to interstitial compartment along the thin ascending limb of Henle's loop, contributing to generation of hypertonic medullary interstitium as a countercurrent system to achieve urine concentration. Conducts chloride currents in the stria vascularis of the inner ear to establish the endocochlear potential necessary for normal hearing. In Homo sapiens (Human), this protein is Chloride channel protein ClC-Ka.